A 131-amino-acid chain; its full sequence is Small ribosomal subunit protein bS6 (131 aa).

The tract at residues 100–131 (SPMVKAKDERRERREDFANETSDDADAGDSEE) is disordered. Residues 104-116 (KAKDERRERREDF) are compositionally biased toward basic and acidic residues. The segment covering 120–131 (TSDDADAGDSEE) has biased composition (acidic residues).

It belongs to the bacterial ribosomal protein bS6 family.

Its function is as follows. Binds together with bS18 to 16S ribosomal RNA. This Erwinia tasmaniensis (strain DSM 17950 / CFBP 7177 / CIP 109463 / NCPPB 4357 / Et1/99) protein is Small ribosomal subunit protein bS6.